The following is a 346-amino-acid chain: Cyclin-dependent kinase 7 (346 aa).

Residue alanine 2 is modified to N-acetylalanine. Serine 7 carries the phosphoserine modification. The Protein kinase domain maps to 12-295 (YEKLDFLGEG…ATQALKMKYF (284 aa)). ATP-binding positions include 18-26 (LGEGQFATV) and lysine 41. Aspartate 137 acts as the Proton acceptor in catalysis. Serine 164 is subject to Phosphoserine; by CDK1 and CDK2. Threonine 170 is modified (phosphothreonine; by CDK2). A Phosphoserine modification is found at serine 321.

The protein belongs to the protein kinase superfamily. CMGC Ser/Thr protein kinase family. CDC2/CDKX subfamily. Associates primarily with cyclin-H (CCNH) and MAT1 to form the CAK complex. CAK can further associate with the core-TFIIH to form the TFIIH basal transcription factor; this complex is sensitive to UV light. The CAK complex binds to p53/TP53 in response to DNA damage. Interacts with CDK2, SF1/NR5A1, PUF60 and PRKCI. Interacts with HINT1. Post-translationally, phosphorylation of Ser-164 during mitosis inactivates the enzyme. Phosphorylation of Thr-170 is required for activity. Phosphorylated at Ser-164 and Thr-170 by CDK2. In terms of tissue distribution, ubiquitous.

It is found in the nucleus. It localises to the cytoplasm. The protein resides in the perinuclear region. The catalysed reaction is L-seryl-[protein] + ATP = O-phospho-L-seryl-[protein] + ADP + H(+). It catalyses the reaction L-threonyl-[protein] + ATP = O-phospho-L-threonyl-[protein] + ADP + H(+). It carries out the reaction [DNA-directed RNA polymerase] + ATP = phospho-[DNA-directed RNA polymerase] + ADP + H(+). Inactivated by phosphorylation. Repressed by roscovitine (seliciclib, CYC202), R547 (Ro-4584820) and SNS-032 (BMS-387032). The association of p53/TP53 to the CAK complex in response to DNA damage reduces kinase activity toward CDK2 and RNA polymerase II repetitive C-terminal domain (CTD), thus stopping cell cycle progression. The inactivation by roscovitine promotes caspase-mediated apoptosis in leukemic cells. Specifically inactivated by THZ1. In terms of biological role, serine/threonine kinase involved in cell cycle control and in RNA polymerase II-mediated RNA transcription. Cyclin-dependent kinases (CDKs) are activated by the binding to a cyclin and mediate the progression through the cell cycle. Each different complex controls a specific transition between 2 subsequent phases in the cell cycle. Required for both activation and complex formation of CDK1/cyclin-B during G2-M transition, and for activation of CDK2/cyclins during G1-S transition (but not complex formation). CDK7 is the catalytic subunit of the CDK-activating kinase (CAK) complex. Phosphorylates SPT5/SUPT5H, SF1/NR5A1, POLR2A, p53/TP53, CDK1, CDK2, CDK4, CDK6 and CDK11B/CDK11. Initiates transcription by RNA polymerase II by mediating phosphorylation of POLR2A at 'Ser-5' of the repetitive C-terminal domain (CTD) when POLR2A is in complex with DNA, promoting dissociation from DNA and initiation. CAK activates the cyclin-associated kinases CDK1, CDK2, CDK4 and CDK6 by threonine phosphorylation, thus regulating cell cycle progression. CAK complexed to the core-TFIIH basal transcription factor activates RNA polymerase II by serine phosphorylation of the CTD of POLR2A, allowing its escape from the promoter and elongation of the transcripts. Its expression and activity are constant throughout the cell cycle. Upon DNA damage, triggers p53/TP53 activation by phosphorylation, but is inactivated in turn by p53/TP53; this feedback loop may lead to an arrest of the cell cycle and of the transcription, helping in cell recovery, or to apoptosis. Required for DNA-bound peptides-mediated transcription and cellular growth inhibition. The sequence is that of Cyclin-dependent kinase 7 (CDK7) from Homo sapiens (Human).